Reading from the N-terminus, the 126-residue chain is Large ribosomal subunit protein uL22 (126 aa).

This sequence belongs to the universal ribosomal protein uL22 family. As to quaternary structure, part of the 50S ribosomal subunit.

This protein binds specifically to 23S rRNA; its binding is stimulated by other ribosomal proteins, e.g. L4, L17, and L20. It is important during the early stages of 50S assembly. It makes multiple contacts with different domains of the 23S rRNA in the assembled 50S subunit and ribosome. Its function is as follows. The globular domain of the protein is located near the polypeptide exit tunnel on the outside of the subunit, while an extended beta-hairpin is found that lines the wall of the exit tunnel in the center of the 70S ribosome. This chain is Large ribosomal subunit protein uL22, found in Maricaulis maris (strain MCS10) (Caulobacter maris).